Here is a 192-residue protein sequence, read N- to C-terminus: uncharacterized protein (192 aa).

Residues 29-160 enclose the Nudix hydrolase domain; that stretch reads QRQAAVLIPV…PLDVYRRGNS (132 aa). The Nudix box signature appears at 67 to 89; sequence GAVDSTDASLIAAALREAQEEVA. 2 residues coordinate Mg(2+): glutamate 83 and glutamate 87.

Belongs to the Nudix hydrolase family. PCD1 subfamily. Mn(2+) is required as a cofactor. It depends on Mg(2+) as a cofactor.

Probably mediates the hydrolysis of some nucleoside diphosphate derivatives. This is an uncharacterized protein from Salmonella newport (strain SL254).